A 1272-amino-acid chain; its full sequence is Myosin-binding protein C, cardiac-type (1272 aa).

The segment at 95 to 147 (KEPEKSEPVAPAEASPAPAASELPAPPVESNQNPEVPPAETQPEEPVDPIGLF) is disordered. Residues 102-117 (PVAPAEASPAPAASEL) are compositionally biased toward low complexity. Residues 137–252 (PEEPVDPIGL…NLIVNEAPVS (116 aa)) enclose the Ig-like C2-type 1 domain. Serine 265 is subject to Phosphoserine; by PKA and PKC. Position 274 is a phosphothreonine; by PKA and PKC (threonine 274). Serine 300 carries the post-translational modification Phosphoserine; by PKA. Ig-like C2-type domains follow at residues 359 to 451 (KKST…VKEP), 452 to 542 (PILI…VQEK), 543 to 640 (KLEV…FVPR), and 644 to 763 (PKIH…ADIT). 2 Fibronectin type-III domains span residues 772-868 (PPEA…IAPP) and 870-965 (EPTH…VQEI). An Ig-like C2-type 6 domain is found at 969–1057 (PKICVPRHLR…ENMTDTVAIT (89 aa)). The region spanning 1066 to 1161 (PPQNIKLADV…TKNPAYIQKT (96 aa)) is the Fibronectin type-III 3 domain. The residue at position 1169 (serine 1169) is a Phosphoserine; by PKC. An Ig-like C2-type 7 domain is found at 1179–1263 (PKFTHPLVNR…VNERGEAEIE (85 aa)).

Belongs to the immunoglobulin superfamily. MyBP family. In terms of processing, substrate for phosphorylation by PKA and PKC. Reversible phosphorylation appears to modulate contraction. Expressed specifically in cardiac muscle among adult tissues, but is also expressed transiently in the skeletal muscle at early developmental stages. Isoform Type I is found in embryonic skeletal muscle and isoform Type II is found in both embryonic skeletal and cardiac muscle.

Its function is as follows. Thick filament-associated protein located in the crossbridge region of vertebrate striated muscle A bands. In vitro it binds MHC, F-actin and native thin filaments, and modifies the activity of actin-activated myosin ATPase. It may modulate muscle contraction or may play a more structural role. May be involved in the early phase of myofibrillogenesis. The chain is Myosin-binding protein C, cardiac-type (MYBPC3) from Gallus gallus (Chicken).